The primary structure comprises 822 residues: Tubulin polyglutamylase TTLL6 (822 aa).

The tract at residues methionine 1–leucine 24 is disordered. Residues glutamate 8–leucine 24 show a composition bias toward acidic residues. Residues lysine 57–glutamate 400 form the TTL domain. ATP contacts are provided by residues lysine 174, glutamine 180–glycine 181, glutamine 202–isoleucine 205, and lysine 215–aspartate 217. Position 180 (glutamine 180) interacts with a protein. L-glutamate is bound at residue arginine 241. An ATP-binding site is contributed by threonine 263–asparagine 264. Residues tyrosine 265, serine 266, and lysine 283 each contribute to the L-glutamate site. 3 residues coordinate Mg(2+): aspartate 346, glutamate 359, and asparagine 361. Residue histidine 362 participates in a protein binding. The interval lysine 371–glycine 450 is c-MTBD region. Residue lysine 377 coordinates L-glutamate. Disordered regions lie at residues proline 736 to valine 772 and threonine 791 to alanine 822. Positions serine 802–glutamine 814 are enriched in polar residues.

The protein belongs to the tubulin--tyrosine ligase family. In terms of assembly, found in a complex with CEP41. Mg(2+) serves as cofactor. In terms of tissue distribution, highly expressed in testis. Expressed in brain, heart, kidney, liver, lung, muscle and trachea. In the brain, specifically expressed in ependymal cilia.

The protein resides in the cytoplasm. Its subcellular location is the cytoskeleton. It is found in the cilium axoneme. It localises to the cilium basal body. The enzyme catalyses L-glutamyl-[protein] + L-glutamate + ATP = gamma-L-glutamyl-L-glutamyl-[protein] + ADP + phosphate + H(+). The catalysed reaction is (L-glutamyl)(n)-gamma-L-glutamyl-L-glutamyl-[protein] + L-glutamate + ATP = (L-glutamyl)(n+1)-gamma-L-glutamyl-L-glutamyl-[protein] + ADP + phosphate + H(+). Its function is as follows. Polyglutamylase which modifies both tubulin and non-tubulin proteins, generating alpha-linked polyglutamate side chains on the gamma-carboxyl group of specific glutamate residues of target proteins. Preferentially mediates ATP-dependent long polyglutamate chain elongation over the initiation step of the polyglutamylation reaction. Preferentially modifies the alpha-tubulin tail over a beta-tail. Promotes tubulin polyglutamylation which stimulates spastin/SPAST-mediated microtubule severing, thereby regulating microtubule functions. Mediates microtubule polyglutamylation in primary cilia axoneme which is important for ciliary structural formation and motility. Mediates microtubule polyglutamylation in motile cilia, necessary for the regulation of ciliary coordinated beating. Polyglutamylates non-tubulin protein nucleotidyltransferase CGAS, leading to CGAS DNA-binding inhibition, thereby preventing antiviral defense response. This Mus musculus (Mouse) protein is Tubulin polyglutamylase TTLL6.